The following is a 518-amino-acid chain: MFS-type transporter cnsO (518 aa).

Residues 1–13 (MESTDSSPPLSMT) show a composition bias toward polar residues. The segment at 1–24 (MESTDSSPPLSMTDTEKKGDAVTT) is disordered. A run of 9 helical transmembrane segments spans residues 99–119 (LALMYFFFTYGLSEPVSNIML), 122–142 (VGPKIWFPFIVCAWGLITTLT), 156–176 (LMLGITEAGLYPGAYFILSMW), 187–207 (AIFYGANTTAGAFGGVIAYGV), 221–241 (WLFLIEGCITIFAGLACLFCL), 298–318 (FMMMLFWWGGSVPTYSLSYTL), 334–354 (VMTTPPYIFATCVCVAVGYIS), 362–382 (LCIMGAYTLGLIGIIILWITV), and 392–412 (YFAIFLAAAGYSAQAPIVGAW). A glycan (N-linked (GlcNAc...) asparagine) is linked at Asn-416. Transmembrane regions (helical) follow at residues 427–447 (IGLLMLLGSVGGGSIGSNIYI) and 455–475 (PLGFGFSVGATVLGAMIPATI).

It belongs to the major facilitator superfamily.

It localises to the cell membrane. MFS-type transporter; part of the gene cluster that mediates the biosynthesis of communesins, a prominent class of indole alkaloids with great potential as pharmaceuticals. With the MFS transporter cnsL, is most likely responsible for cummunesins secretion and thereby may contribute to intrinsic resistance. This is MFS-type transporter cnsO from Penicillium expansum (Blue mold rot fungus).